Here is a 420-residue protein sequence, read N- to C-terminus: 3-isopropylmalate dehydratase large subunit (420 aa).

The [4Fe-4S] cluster site is built by Cys300, Cys360, and Cys363.

This sequence belongs to the aconitase/IPM isomerase family. LeuC type 2 subfamily. In terms of assembly, heterodimer of LeuC and LeuD. The cofactor is [4Fe-4S] cluster.

It catalyses the reaction (2R,3S)-3-isopropylmalate = (2S)-2-isopropylmalate. It functions in the pathway amino-acid biosynthesis; L-leucine biosynthesis; L-leucine from 3-methyl-2-oxobutanoate: step 2/4. Its function is as follows. Catalyzes the isomerization between 2-isopropylmalate and 3-isopropylmalate, via the formation of 2-isopropylmaleate. The chain is 3-isopropylmalate dehydratase large subunit from Halothermothrix orenii (strain H 168 / OCM 544 / DSM 9562).